We begin with the raw amino-acid sequence, 829 residues long: Periplasmic nitrate reductase (829 aa).

Positions 1-36 (MARRDFIKQTAAAAAATVAGVPLTGYTQNIVTESEA) form a signal peptide, tat-type signal. The 4Fe-4S Mo/W bis-MGD-type domain occupies 39 to 95 (LKWSKAPCRFCGTGCGVNVAVKDNQVVATHGDFNAEVNKGLNCVKGYFLSKIMYGSD). Residues C46, C49, C53, and C81 each contribute to the [4Fe-4S] cluster site. Residues K83, Q150, N175, C179, 212-219 (WGSNMAEM), 243-247 (STFEH), 262-264 (QSD), M373, Q377, N483, 509-510 (SD), K532, D559, and 719-728 (TGRVLEHWHS) each bind Mo-bis(molybdopterin guanine dinucleotide). W795 serves as a coordination point for substrate. Mo-bis(molybdopterin guanine dinucleotide) contacts are provided by N803 and K820.

This sequence belongs to the prokaryotic molybdopterin-containing oxidoreductase family. NasA/NapA/NarB subfamily. Component of the periplasmic nitrate reductase NapAB complex composed of NapA and NapB. [4Fe-4S] cluster is required as a cofactor. Mo-bis(molybdopterin guanine dinucleotide) serves as cofactor. Predicted to be exported by the Tat system. The position of the signal peptide cleavage has not been experimentally proven.

The protein localises to the periplasm. The enzyme catalyses 2 Fe(II)-[cytochrome] + nitrate + 2 H(+) = 2 Fe(III)-[cytochrome] + nitrite + H2O. In terms of biological role, catalytic subunit of the periplasmic nitrate reductase complex NapAB. Receives electrons from NapB and catalyzes the reduction of nitrate to nitrite. The polypeptide is Periplasmic nitrate reductase (Bordetella bronchiseptica (strain ATCC BAA-588 / NCTC 13252 / RB50) (Alcaligenes bronchisepticus)).